The chain runs to 184 residues: dCTP deaminase (184 aa).

Residue 107-112 (KSTIAR) coordinates dCTP. The Proton donor/acceptor role is filled by Glu133. Positions 152, 166, and 176 each coordinate dCTP.

The protein belongs to the dCTP deaminase family. In terms of assembly, homotrimer.

The enzyme catalyses dCTP + H2O + H(+) = dUTP + NH4(+). It functions in the pathway pyrimidine metabolism; dUMP biosynthesis; dUMP from dCTP (dUTP route): step 1/2. Its function is as follows. Catalyzes the deamination of dCTP to dUTP. The sequence is that of dCTP deaminase from Roseiflexus castenholzii (strain DSM 13941 / HLO8).